We begin with the raw amino-acid sequence, 166 residues long: 3-dehydroquinate dehydratase (166 aa).

The active-site Proton acceptor is the Tyr-22. Positions 73, 79, and 86 each coordinate substrate. Catalysis depends on His-99, which acts as the Proton donor. Residues 100–101 (IT) and Arg-110 each bind substrate.

This sequence belongs to the type-II 3-dehydroquinase family. Homododecamer.

It carries out the reaction 3-dehydroquinate = 3-dehydroshikimate + H2O. It participates in metabolic intermediate biosynthesis; chorismate biosynthesis; chorismate from D-erythrose 4-phosphate and phosphoenolpyruvate: step 3/7. Its function is as follows. Catalyzes a trans-dehydration via an enolate intermediate. The polypeptide is 3-dehydroquinate dehydratase (Wolinella succinogenes (strain ATCC 29543 / DSM 1740 / CCUG 13145 / JCM 31913 / LMG 7466 / NCTC 11488 / FDC 602W) (Vibrio succinogenes)).